The sequence spans 1480 residues: Nonribosomal peptide synthetase inpA (1480 aa).

Residues 1-17 show a composition bias toward low complexity; that stretch reads MSHSMSSSSSSSSSSSS. The tract at residues 1 to 24 is disordered; that stretch reads MSHSMSSSSSSSSSSSSSRDEGQS. Positions 44 to 458 are condensation; that stretch reads VQDVYPCTPL…QLISPQDLDQ (415 aa). Positions 479–871 are adenylation; it reads QRHIDTRPDA…GRKDSQVKIR (393 aa). The region spanning 1003 to 1082 is the Carrier domain; it reads DSTNKVALRL…GLAAMITSPH (80 aa). The residue at position 1041 (serine 1041) is an O-(pantetheine 4'-phosphoryl)serine. The interval 1117-1436 is thioesterase (TE) domain; that stretch reads KVFLTGATGL…VLAMLQDPQM (320 aa).

It belongs to the NRP synthetase family.

It participates in secondary metabolite biosynthesis. Its function is as follows. Nonribosomal peptide synthetase; part of the inp gene cluster that mediates the biosynthesis of fellutamide B, a mycotoxin that acts as a proteasome inhibitor. In the first step of fellutabmide B biosynthesis, inpC activates 3-hydroxydodecanoic acid to generate 3-hydroxydodecanoyl-AMP that is then loaded onto the T0 domain of inpB. The 3-hydroxydodecanoyl-S-phosphopantetheinyl-T0 is sequentially extended with L-Asn and L-Gln by the two CAT modules of inpB. The linear lipodipeptide from inpB is then transferred onto inpA for the addition of the third amino acid, L-Leu. Reductive releasing of the lipotripeptide by the TE domain of inpA produces (2S)-fellutamide B. InpF might be involved in the release and transfer of the lipodipeptide from inpB to inpA. The inp cluster-encoded proteasome subunit inpE confers resistance to internally produced fellutamides. The MFS efflux transporter inpD may contribute to fellutamide resistance as well. This chain is Nonribosomal peptide synthetase inpA, found in Emericella nidulans (strain FGSC A4 / ATCC 38163 / CBS 112.46 / NRRL 194 / M139) (Aspergillus nidulans).